Here is a 663-residue protein sequence, read N- to C-terminus: UvrABC system protein B (663 aa).

The segment covering 1 to 10 has biased composition (basic and acidic residues); that stretch reads MIDKRDDKPF. Residues 1 to 23 are disordered; it reads MIDKRDDKPFKLKSKYKPSGDQP. Residues 31 to 418 enclose the Helicase ATP-binding domain; it reads DNIEGGEKAQ…TNTIIEQIIR (388 aa). 44-51 contributes to the ATP binding site; that stretch reads GATGTGKT. The Beta-hairpin signature appears at 97–120; it reads YYDYYQPEAYVPSSDTYIEKDSSV. The region spanning 435–601 is the Helicase C-terminal domain; that stretch reads QMDDLLGEIN…TIKKDIRGLI (167 aa). The UVR domain occupies 627–662; it reads KEAINALQKQMQEAAELLDFELAAQMRDLILELKLM.

This sequence belongs to the UvrB family. Forms a heterotetramer with UvrA during the search for lesions. Interacts with UvrC in an incision complex.

The protein localises to the cytoplasm. Its function is as follows. The UvrABC repair system catalyzes the recognition and processing of DNA lesions. A damage recognition complex composed of 2 UvrA and 2 UvrB subunits scans DNA for abnormalities. Upon binding of the UvrA(2)B(2) complex to a putative damaged site, the DNA wraps around one UvrB monomer. DNA wrap is dependent on ATP binding by UvrB and probably causes local melting of the DNA helix, facilitating insertion of UvrB beta-hairpin between the DNA strands. Then UvrB probes one DNA strand for the presence of a lesion. If a lesion is found the UvrA subunits dissociate and the UvrB-DNA preincision complex is formed. This complex is subsequently bound by UvrC and the second UvrB is released. If no lesion is found, the DNA wraps around the other UvrB subunit that will check the other stand for damage. The polypeptide is UvrABC system protein B (Streptococcus pyogenes serotype M28 (strain MGAS6180)).